The primary structure comprises 1300 residues: Insulin receptor-related protein (1300 aa).

The N-terminal stretch at 1 to 26 (MARPKLWPWGILLLVSLLSAGFNLDT) is a signal peptide. A glycan (N-linked (GlcNAc...) asparagine) is linked at Asn47. 9 disulfide bridges follow: Cys214-Cys222, Cys216-Cys228, Cys229-Cys237, Cys233-Cys246, Cys249-Cys258, Cys262-Cys274, Cys280-Cys300, Cys304-Cys317, and Cys320-Cys324. N-linked (GlcNAc...) asparagine glycosylation is present at Asn311. N-linked (GlcNAc...) asparagine glycans are attached at residues Asn411, Asn492, Asn528, Asn616, Asn634, Asn756, Asn885, and Asn898. Fibronectin type-III domains follow at residues 483 to 603 (QTRT…TLPA) and 607 to 707 (VPQD…AQEA). Cys657 and Cys864 are joined by a disulfide. The disordered stretch occupies residues 740 to 762 (DAGRHRRAIGSPRPGGNSSDFEI). The Extracellular segment spans residues 747 to 921 (AIGSPRPGGN…PEEEDSGGLH (175 aa)). The Fibronectin type-III 3 domain occupies 818-912 (IPGKLSWEAA…DSVAFYIPGP (95 aa)). The chain crosses the membrane as a helical span at residues 922-943 (ILLTVTPAGLMLLIILAALGFF). Over 944-1300 (YSRKRNGTLY…CSLQNGGPEH (357 aa)) the chain is Cytoplasmic. The Protein kinase domain maps to 979–1254 (ISIIRELGQG…SIQKELRPSF (276 aa)). ATP is bound by residues 985–993 (LGQGSFGMV) and Lys1013. Asp1115 acts as the Proton acceptor in catalysis. Tyr1145 and Tyr1146 each carry phosphotyrosine; by autocatalysis. A disordered region spans residues 1270–1300 (GLQPTTDAESSSPPTSKGASDCSLQNGGPEH). Polar residues predominate over residues 1272-1300 (QPTTDAESSSPPTSKGASDCSLQNGGPEH).

Belongs to the protein kinase superfamily. Tyr protein kinase family. Insulin receptor subfamily. As to quaternary structure, probable tetramer of 2 alpha and 2 beta chains linked by disulfide bonds. The alpha chains contribute to the formation of the ligand-binding domain, while the beta chains carry the kinase domain. Post-translationally, autophosphorylated on tyrosine residues between pH 7.9 and pH 10.5.

It localises to the membrane. The catalysed reaction is L-tyrosyl-[protein] + ATP = O-phospho-L-tyrosyl-[protein] + ADP + H(+). In terms of biological role, receptor with tyrosine-protein kinase activity. Functions as a pH sensing receptor which is activated by increased extracellular pH. Activates an intracellular signaling pathway that involves IRS1 and AKT1/PKB. The chain is Insulin receptor-related protein (INSRR) from Cavia porcellus (Guinea pig).